A 499-amino-acid chain; its full sequence is MTDTQDKHYIIALDQGTTSSRAIIFDRDANVVGTSQREFAQHYPQAGWVEHDPMEIFATQSATMVEALAQAGISHAQVAALGITNQRETTVVWDKETGRPVYNAIVWQCRRSTEICAQLKRDGHEAYIRETTGLVTDPYFSGTKLKWILDNVEGARERAERGELLFGTIDTWLIWKFSGGKVHVTDYTNASRTLMFNIHSLQWDDKLLEILGIPRQMLPEVRPSSEVYGHTKSGIAIAGIAGDQQSALFGQMCVEPGQAKNTYGTGCFLLMNTGDQAVKSSHGLLTTIACGPRGEVAYALEGAVFNGGSTVQWLRDELKIVNDALDTEYFASKVKDSNGVYLVPAFTGLGAPYWDPYARGALFGLTRGVKVDHIIRAALESIAYQTRDVLDAMQQDCGQHLSELRVDGGAVANNFLMQFQADILGTCVERPQMRETTALGAAYLAGLACGFWSGLDELRDKAIIEREFSPQLDETQKEKLYAGWKKAVERTRDWEDHEA.

Residue threonine 17 coordinates ADP. Residues threonine 17, threonine 18, and serine 19 each contribute to the ATP site. Threonine 17 is a sn-glycerol 3-phosphate binding site. Arginine 21 provides a ligand contact to ADP. Residues arginine 87, glutamate 88, tyrosine 139, and aspartate 243 each coordinate sn-glycerol 3-phosphate. Residues arginine 87, glutamate 88, tyrosine 139, aspartate 243, and glutamine 244 each contribute to the glycerol site. Residues threonine 265 and glycine 308 each contribute to the ADP site. Positions 265, 308, 312, and 409 each coordinate ATP. Positions 409 and 413 each coordinate ADP.

Belongs to the FGGY kinase family.

The catalysed reaction is glycerol + ATP = sn-glycerol 3-phosphate + ADP + H(+). Its pathway is polyol metabolism; glycerol degradation via glycerol kinase pathway; sn-glycerol 3-phosphate from glycerol: step 1/1. Its activity is regulated as follows. Inhibited by fructose 1,6-bisphosphate (FBP). Functionally, key enzyme in the regulation of glycerol uptake and metabolism. Catalyzes the phosphorylation of glycerol to yield sn-glycerol 3-phosphate. This chain is Glycerol kinase, found in Pseudomonas putida (strain GB-1).